The chain runs to 271 residues: Gasdermin bGSDM (271 aa).

Residue cysteine 7 is the site of S-palmitoyl cysteine attachment. A run of 4 beta stranded transmembrane segments spans residues 74–90, 102–120, 168–185, and 194–210; these read IAGTQSADLDVDLGLSV, TLGVDAAFARAATVQFEFS, RINVAAKDSNKQSLGLNL, and ANVKIAAAAASGSTVSF.

This sequence belongs to the bacterial gasdermin family. As to quaternary structure, monomer. Forms large, homooligomeric ring-shaped pores when inserted in membranes. Palmitoylation helps stabilize the inactive state; may self palmitoylate. Palmitoylation plays a significant role in pore formation.

Its subcellular location is the cytoplasm. The protein resides in the cell inner membrane. Its activity is regulated as follows. The full-length protein before cleavage is inactive: intramolecular interactions between the N-terminal domain and the C-terminal region as well as the lipid modification, mediate autoinhibition. The pyroptosis-like-inducing activity is carried by the released N-terminal domain (Gasdermin bGSDM, N-terminus). In terms of biological role, involved in defense against bacteriophages. When this probable 4 gene operon (bGSDM-FE772_23060-FE772_23065-FE772_23070) is inserted into E.coli it provides nearly 100-fold protection against phages T5 and T6 and about 8-fold against phage T4. The operon without bGSDM no longer protects against phage. Cleavage of this precursor by its dedicated protease(s) releases the active moiety (gasdermin bGSDM, N-terminus) which inserts into membranes, forming pores and triggering cell death. Its function is as follows. Pore-forming protein that causes membrane permeabilization via a pyroptosis-like activity. Makes ring-like pores when released. This chain is Gasdermin bGSDM, found in Lysobacter enzymogenes.